Consider the following 428-residue polypeptide: Ribulose bisphosphate carboxylase (428 aa).

The active-site Proton acceptor is the Lys-151. Lys-153 serves as a coordination point for substrate. Residues Lys-177, Asp-179, and Glu-180 each coordinate Mg(2+). The residue at position 177 (Lys-177) is an N6-carboxylysine. The active-site Proton acceptor is His-270. Residues Arg-271, His-303, 354–356 (SGG), and 376–379 (QFGG) contribute to the substrate site.

This sequence belongs to the RuBisCO large chain family. Type III subfamily. Homodimer. In contrast to form I RuBisCO, the form III RuBisCO is composed solely of large subunits. Requires Mg(2+) as cofactor.

It carries out the reaction 2 (2R)-3-phosphoglycerate + 2 H(+) = D-ribulose 1,5-bisphosphate + CO2 + H2O. The enzyme catalyses D-ribulose 1,5-bisphosphate + O2 = 2-phosphoglycolate + (2R)-3-phosphoglycerate + 2 H(+). Its activity is regulated as follows. Reversibly inhibited by O(2). In terms of biological role, catalyzes the addition of molecular CO(2) and H(2)O to ribulose 1,5-bisphosphate (RuBP), generating two molecules of 3-phosphoglycerate (3-PGA). Functions in an archaeal AMP degradation pathway, together with AMP phosphorylase and R15P isomerase. This chain is Ribulose bisphosphate carboxylase, found in Methanosarcina acetivorans (strain ATCC 35395 / DSM 2834 / JCM 12185 / C2A).